The primary structure comprises 117 residues: MIIKQSSNVLRKKRHLRLRKIIIGTITRPRLNIFRSNKFIYVQLIDDNAQNTLCSVHSKETNVIGSNIKAAQAVGTLIAQKALALGIKNIVFDRSGYLYHGKIKALAEACRQSGLQF.

This sequence belongs to the universal ribosomal protein uL18 family. In terms of assembly, part of the 50S ribosomal subunit; part of the 5S rRNA/L5/L18/L25 subcomplex. Contacts the 5S and 23S rRNAs.

Its function is as follows. This is one of the proteins that bind and probably mediate the attachment of the 5S RNA into the large ribosomal subunit, where it forms part of the central protuberance. The sequence is that of Large ribosomal subunit protein uL18 from Phytoplasma australiense.